Here is a 595-residue protein sequence, read N- to C-terminus: Isoprene synthase, chloroplastic (595 aa).

The N-terminal 37 residues, 1-37 (MATELLCLHRPISLTHKLFRNPLPKVIQATPLTLKLR), are a transit peptide targeting the chloroplast. Asp-345 serves as a coordination point for dimethylallyl diphosphate. Mg(2+) contacts are provided by Asp-345 and Asp-349. The DDXXD motif motif lies at 345–349 (DDIYD). 3 residues coordinate dimethylallyl diphosphate: Glu-423, Arg-486, and Asn-489. Positions 489, 493, and 497 each coordinate Mg(2+).

Belongs to the terpene synthase family. Tpsb subfamily. It depends on Mg(2+) as a cofactor. Requires Mn(2+) as cofactor.

The protein resides in the plastid. Its subcellular location is the chloroplast. It carries out the reaction dimethylallyl diphosphate = isoprene + diphosphate. Lyase that catalyzes the formation of isoprene from dimethylallyl diphosphate. The sequence is that of Isoprene synthase, chloroplastic (ISPS) from Populus tremuloides (Quaking aspen).